The sequence spans 258 residues: Indole-3-glycerol phosphate synthase (258 aa).

It belongs to the TrpC family.

The enzyme catalyses 1-(2-carboxyphenylamino)-1-deoxy-D-ribulose 5-phosphate + H(+) = (1S,2R)-1-C-(indol-3-yl)glycerol 3-phosphate + CO2 + H2O. Its pathway is amino-acid biosynthesis; L-tryptophan biosynthesis; L-tryptophan from chorismate: step 4/5. The polypeptide is Indole-3-glycerol phosphate synthase (Legionella pneumophila (strain Paris)).